A 246-amino-acid chain; its full sequence is tRNA (guanine-N(1)-)-methyltransferase (246 aa).

S-adenosyl-L-methionine is bound by residues Gly114 and 134 to 139 (IGDYIL).

Belongs to the RNA methyltransferase TrmD family. Homodimer.

It localises to the cytoplasm. The enzyme catalyses guanosine(37) in tRNA + S-adenosyl-L-methionine = N(1)-methylguanosine(37) in tRNA + S-adenosyl-L-homocysteine + H(+). Functionally, specifically methylates guanosine-37 in various tRNAs. The chain is tRNA (guanine-N(1)-)-methyltransferase from Coxiella burnetii (strain RSA 493 / Nine Mile phase I).